Here is an 84-residue protein sequence, read N- to C-terminus: Fulditoxin (84 aa).

Positions Met1–Ser21 are cleaved as a signal peptide. 4 cysteine pairs are disulfide-bonded: Cys24–Cys41, Cys34–Cys59, Cys63–Cys71, and Cys72–Cys77. His50 contacts Zn(2+).

The protein belongs to the three-finger toxin family. Short-chain subfamily. In terms of assembly, homodimer; non-covalently linked. Is able to form a tetramer of dimers in the presence of 2 zinc ions. As to expression, expressed by the venom gland.

It localises to the secreted. In terms of biological role, postsynaptic neurotoxin that produces potent, and completely reversible, postsynaptic neuromuscular blockade, as well as broad spectrum inhibition of human muscle and neuronal nicotinic acetylcholine receptors (nAChRs). Inhibition is potent or moderate, depending on the receptor (alpha-1-beta-1-delta-epsilon/CHRNA1-CHRNB1-CHRND-CHRNE (IC(50)=2.56 uM), alpha-4-beta-2/CHRNA4-CHRNB2 (IC(50)=1.8 uM), alpha-7/CHRNA7 (IC(50)=7 uM), and alpha-3-beta-2/CHRNA3-CHRNB2 (IC(50)=12.6 uM)). Acts as a competitive antagonist of ACh. Binds to chicken muscle-type nicotinic acetylcholine receptor (AChR) with high potency compared with the cloned human receptor. Unlike short-chain alpha-3FTxs that only bind to muscle nAChRs, this toxin utilizes dimerization to expand its pharmacological targets to block neuronal nAChRs. The sequence is that of Fulditoxin from Micrurus fulvius (Eastern coral snake).